A 337-amino-acid chain; its full sequence is Cysteine proteinase 3 (337 aa).

The N-terminal stretch at 1–21 (MRLSITLIFTLIVLSISFISA) is a signal peptide. A propeptide spans 22 to 120 (GNVFSHKQYQ…GLRLNRPQFK (99 aa)) (activation peptide). Disulfide bonds link C142/C185, C176/C219, and C277/C326. C145 is a catalytic residue. Active-site residues include H284 and N304.

Belongs to the peptidase C1 family.

Its subcellular location is the lysosome. The polypeptide is Cysteine proteinase 3 (cprC) (Dictyostelium discoideum (Social amoeba)).